The primary structure comprises 377 residues: Histidinol-phosphate aminotransferase (377 aa).

N6-(pyridoxal phosphate)lysine is present on Lys232.

This sequence belongs to the class-II pyridoxal-phosphate-dependent aminotransferase family. Histidinol-phosphate aminotransferase subfamily. Homodimer. It depends on pyridoxal 5'-phosphate as a cofactor.

The catalysed reaction is L-histidinol phosphate + 2-oxoglutarate = 3-(imidazol-4-yl)-2-oxopropyl phosphate + L-glutamate. It participates in amino-acid biosynthesis; L-histidine biosynthesis; L-histidine from 5-phospho-alpha-D-ribose 1-diphosphate: step 7/9. The sequence is that of Histidinol-phosphate aminotransferase from Mycobacterium sp. (strain JLS).